Reading from the N-terminus, the 306-residue chain is Foldase protein PrsA (306 aa).

An N-terminal signal peptide occupies residues 1 to 20 (MRRKIALFLALIFVGVSLVS). Cys21 is lipidated: N-palmitoyl cysteine. The S-diacylglycerol cysteine moiety is linked to residue Cys21. Residues 165 to 255 (FEVMRARHIL…YGYHIIKSEG (91 aa)) enclose the PpiC domain.

Belongs to the PrsA family.

The protein resides in the cell membrane. The catalysed reaction is [protein]-peptidylproline (omega=180) = [protein]-peptidylproline (omega=0). Plays a major role in protein secretion by helping the post-translocational extracellular folding of several secreted proteins. This Caldanaerobacter subterraneus subsp. tengcongensis (strain DSM 15242 / JCM 11007 / NBRC 100824 / MB4) (Thermoanaerobacter tengcongensis) protein is Foldase protein PrsA.